A 248-amino-acid chain; its full sequence is Protein maestro (248 aa).

A disordered region spans residues 1–23 (MEQTRKIPNQPLPTPTSQSKKRR). Residues 128–163 (SFFIDITLQARTLLDDEDDSVRYSAFVLFGQLASFA) form an HEAT repeat.

In terms of tissue distribution, prominent expression seen in testis, brain, liver and heart. Weakly expressed in the kidney.

It localises to the nucleus. Its subcellular location is the nucleolus. The polypeptide is Protein maestro (Mro) (Mus musculus (Mouse)).